A 168-amino-acid polypeptide reads, in one-letter code: Putative apoptosis regulator A9 (168 aa).

The helical transmembrane segment at Ser-143–Phe-162 threads the bilayer.

It is found in the host membrane. Suppresses apoptosis in host cell and thus facilitates production of progeny virions. The polypeptide is Putative apoptosis regulator A9 (A9) (Alcelaphine herpesvirus 1 (strain C500) (AlHV-1)).